We begin with the raw amino-acid sequence, 299 residues long: Oxygen-dependent coproporphyrinogen-III oxidase (299 aa).

S92 provides a ligand contact to substrate. 2 residues coordinate a divalent metal cation: H96 and H106. Catalysis depends on H106, which acts as the Proton donor. 108–110 (NVR) is a binding site for substrate. Residues H145 and H175 each contribute to the a divalent metal cation site. Residues 240 to 275 (YVEFNLVWDRGTLFGLQTGGRTESILMSMPPLVRWE) are important for dimerization. 258–260 (GGR) provides a ligand contact to substrate.

The protein belongs to the aerobic coproporphyrinogen-III oxidase family. As to quaternary structure, homodimer. The cofactor is a divalent metal cation.

It localises to the cytoplasm. The enzyme catalyses coproporphyrinogen III + O2 + 2 H(+) = protoporphyrinogen IX + 2 CO2 + 2 H2O. It participates in porphyrin-containing compound metabolism; protoporphyrin-IX biosynthesis; protoporphyrinogen-IX from coproporphyrinogen-III (O2 route): step 1/1. In terms of biological role, involved in the heme biosynthesis. Catalyzes the aerobic oxidative decarboxylation of propionate groups of rings A and B of coproporphyrinogen-III to yield the vinyl groups in protoporphyrinogen-IX. This Salmonella newport (strain SL254) protein is Oxygen-dependent coproporphyrinogen-III oxidase.